A 117-amino-acid chain; its full sequence is MNNIIKMLNDEQMKQDVPAFGAGDTVVVQVRVKEGDKERLQAFEGVVIAKRNRGLHSAFTVRKISNGEGVERAFQTHSPLIASIEVKRRGRVRRAKLYYLRDRSGKSARIREKLATK.

This sequence belongs to the bacterial ribosomal protein bL19 family.

Its function is as follows. This protein is located at the 30S-50S ribosomal subunit interface and may play a role in the structure and function of the aminoacyl-tRNA binding site. The polypeptide is Large ribosomal subunit protein bL19 (Shewanella baltica (strain OS155 / ATCC BAA-1091)).